Reading from the N-terminus, the 196-residue chain is Mediator of RNA polymerase II transcription subunit 31 (196 aa).

Over residues 1–12 the composition is skewed to acidic residues; the sequence is MASPEEMGDDAS. Disordered regions lie at residues 1 to 24 and 133 to 196; these read MASP…TYKD and RPLP…KKGI. Residues 133–155 show a composition bias toward pro residues; the sequence is RPLPEPVPPQPPVAPSTSLPPAP. Low complexity predominate over residues 156-167; sequence SATAALSPALSP. Residues 168–182 are compositionally biased toward polar residues; it reads MQYNNMLSKNDTRNM.

This sequence belongs to the Mediator complex subunit 31 family. In terms of assembly, component of the Mediator complex.

The protein resides in the nucleus. Functionally, component of the Mediator complex, a coactivator involved in the regulated transcription of nearly all RNA polymerase II-dependent genes. Mediator functions as a bridge to convey information from gene-specific regulatory proteins to the basal RNA polymerase II transcription machinery. Mediator is recruited to promoters by direct interactions with regulatory proteins and serves as a scaffold for the assembly of a functional preinitiation complex with RNA polymerase II and the general transcription factors. The sequence is that of Mediator of RNA polymerase II transcription subunit 31 (MED31) from Arabidopsis thaliana (Mouse-ear cress).